The sequence spans 104 residues: Large ribosomal subunit protein uL24 (104 aa).

It belongs to the universal ribosomal protein uL24 family. Part of the 50S ribosomal subunit.

Its function is as follows. One of two assembly initiator proteins, it binds directly to the 5'-end of the 23S rRNA, where it nucleates assembly of the 50S subunit. In terms of biological role, one of the proteins that surrounds the polypeptide exit tunnel on the outside of the subunit. This is Large ribosomal subunit protein uL24 from Bartonella henselae (strain ATCC 49882 / DSM 28221 / CCUG 30454 / Houston 1) (Rochalimaea henselae).